The chain runs to 472 residues: Violaxanthin de-epoxidase, chloroplastic (472 aa).

6 disulfide bridges follow: cysteine 133–cysteine 151, cysteine 138–cysteine 145, cysteine 157–cysteine 174, cysteine 161–cysteine 170, cysteine 189–cysteine 196, and cysteine 242–cysteine 372. Residues valine 379–phenylalanine 462 are a coiled coil.

This sequence belongs to the calycin superfamily. Lipocalin family. Disulfide bonds. Reduction of the disulfides results in loss of a rigid structure, a decrease in thermal stability of 15 degrees Celsius and a loss of activity.

It localises to the plastid. The protein localises to the chloroplast thylakoid membrane. The catalysed reaction is all-trans-violaxanthin + 2 L-ascorbate = all-trans-zeaxanthin + 2 L-dehydroascorbate + 2 H2O. Its activity is regulated as follows. Irreversibly inhibited by DTT and iodoacetamide at pH 5.7 or pH 5.2, but not at pH 7.2. Regulated through Ca(2+) gating of H(+) flux at the CFoH(+) channel. Requires the presence of lipids forming reverse hexagonal structures such as monogalactosyldiacylglyceride (MGDG) or phosphatidylethanolamine. A negative curvature elastic stress in the thylakoid lipid bilayer is required for VDE1 activity. In terms of biological role, part of the xanthophyll (or violaxanthin) cycle for controlling the concentration of zeaxanthin in chloroplasts. Catalyzes the two-step mono de-epoxidation reaction. Stereospecific for all-trans xanthophylls. Zeaxanthin induces the dissipation of excitation energy in the chlorophyll of the light-harvesting protein complex of photosystem II. The polypeptide is Violaxanthin de-epoxidase, chloroplastic (Spinacia oleracea (Spinach)).